Reading from the N-terminus, the 531-residue chain is Peptide chain release factor 3 (531 aa).

The region spanning 13–282 is the tr-type G domain; sequence SKRRTFAIIS…GLTQWAPSPM (270 aa). Residues 22–29, 90–94, and 144–147 each bind GTP; these read SHPDAGKT, DTPGH, and NKLD.

This sequence belongs to the TRAFAC class translation factor GTPase superfamily. Classic translation factor GTPase family. PrfC subfamily.

The protein resides in the cytoplasm. Increases the formation of ribosomal termination complexes and stimulates activities of RF-1 and RF-2. It binds guanine nucleotides and has strong preference for UGA stop codons. It may interact directly with the ribosome. The stimulation of RF-1 and RF-2 is significantly reduced by GTP and GDP, but not by GMP. The sequence is that of Peptide chain release factor 3 from Vibrio cholerae serotype O1 (strain ATCC 39315 / El Tor Inaba N16961).